A 193-amino-acid chain; its full sequence is Thymidine kinase (193 aa).

Residues 9-16 (SAMNAGKS) and 87-90 (DEAQ) contribute to the ATP site. The Proton acceptor role is filled by Glu-88. Residues Cys-145, Cys-147, Cys-182, and His-185 each coordinate Zn(2+).

This sequence belongs to the thymidine kinase family. Homotetramer.

It is found in the cytoplasm. The enzyme catalyses thymidine + ATP = dTMP + ADP + H(+). The sequence is that of Thymidine kinase from Idiomarina loihiensis (strain ATCC BAA-735 / DSM 15497 / L2-TR).